A 345-amino-acid chain; its full sequence is GTPase Obg (345 aa).

One can recognise an Obg domain in the interval 1–159; sequence MKFLDQAKVY…KWIWLRLKLI (159 aa). Residues 160–327 form the OBG-type G domain; the sequence is ADAGLVGLPN…ALRALLAVID (168 aa). Residues 166 to 173, 191 to 195, 212 to 215, 279 to 282, and 308 to 310 contribute to the GTP site; these read GLPNAGKS, FTTLH, DIPG, SKID, and SSQ. Mg(2+)-binding residues include S173 and T193.

This sequence belongs to the TRAFAC class OBG-HflX-like GTPase superfamily. OBG GTPase family. As to quaternary structure, monomer. The cofactor is Mg(2+).

Its subcellular location is the cytoplasm. Its function is as follows. An essential GTPase which binds GTP, GDP and possibly (p)ppGpp with moderate affinity, with high nucleotide exchange rates and a fairly low GTP hydrolysis rate. Plays a role in control of the cell cycle, stress response, ribosome biogenesis and in those bacteria that undergo differentiation, in morphogenesis control. This chain is GTPase Obg, found in Azorhizobium caulinodans (strain ATCC 43989 / DSM 5975 / JCM 20966 / LMG 6465 / NBRC 14845 / NCIMB 13405 / ORS 571).